A 1207-amino-acid polypeptide reads, in one-letter code: Actin cytoskeleton-regulatory complex protein SLA1 (1207 aa).

2 consecutive SH3 domains span residues 2-76 (AYVA…EAEP) and 77-142 (IRLS…EAEA). 8 disordered regions span residues 143–185 (VDTG…LPQT), 325–367 (PPAP…EPEE), 448–553 (EEEE…RMWT), 609–667 (TDEE…SARS), 736–757 (RRDK…NANT), 773–919 (RKLQ…APPA), 936–979 (SASV…QGLL), and 1175–1207 (GMGF…GGGF). The segment covering 151-169 (VEDEYTAADEDDEDDDDTD) has biased composition (acidic residues). One can recognise an SH3 3 domain in the interval 367 to 427 (EAVEHGVAMY…PASYVEATDA (61 aa)). Composition is skewed to basic and acidic residues over residues 465–496 (EAER…REAL) and 531–540 (APERPKDGGS). Over residues 542–551 (SKPSPTNTRM) the composition is skewed to polar residues. Composition is skewed to basic and acidic residues over residues 619–629 (RRRERERERQS) and 641–665 (PRED…RESA). Over residues 742–757 (SSLSSSRASGRANANT) the composition is skewed to low complexity. The span at 773–786 (RKLQEQESSARRGD) shows a compositional bias: basic and acidic residues. 2 stretches are compositionally biased toward low complexity: residues 818–853 (SSSN…AVAP) and 877–890 (KPTT…ASPA). Residues 891–908 (PSTPAAPAAPPAPTPPPA) show a composition bias toward pro residues. 3 stretches are compositionally biased toward low complexity: residues 909–919 (AVAVASSAPPA), 936–952 (SASV…PGSS), and 1183–1192 (QQQQQQQQQQ).

It belongs to the SLA1 family. As to quaternary structure, component of the PAN1 actin cytoskeleton-regulatory complex.

Its subcellular location is the cell membrane. It is found in the endosome membrane. The protein resides in the cytoplasm. It localises to the cytoskeleton. The protein localises to the actin patch. Its function is as follows. Component of the PAN1 actin cytoskeleton-regulatory complex required for the internalization of endosomes during actin-coupled endocytosis. The complex links the site of endocytosis to the cell membrane-associated actin cytoskeleton. Mediates uptake of external molecules and vacuolar degradation of plasma membrane proteins. Plays a role in the proper organization of the cell membrane-associated actin cytoskeleton and promotes its destabilization. The sequence is that of Actin cytoskeleton-regulatory complex protein SLA1 (SLA1) from Mycosarcoma maydis (Corn smut fungus).